The primary structure comprises 701 residues: Elongation factor G (701 aa).

Positions 8–290 constitute a tr-type G domain; that stretch reads SLYRNIGISA…AVVELLPAPT (283 aa). GTP is bound by residues 17 to 24, 88 to 92, and 142 to 145; these read AHIDAGKT, DTPGH, and NKMD.

The protein belongs to the TRAFAC class translation factor GTPase superfamily. Classic translation factor GTPase family. EF-G/EF-2 subfamily.

It is found in the cytoplasm. Catalyzes the GTP-dependent ribosomal translocation step during translation elongation. During this step, the ribosome changes from the pre-translocational (PRE) to the post-translocational (POST) state as the newly formed A-site-bound peptidyl-tRNA and P-site-bound deacylated tRNA move to the P and E sites, respectively. Catalyzes the coordinated movement of the two tRNA molecules, the mRNA and conformational changes in the ribosome. The protein is Elongation factor G of Neisseria meningitidis serogroup C (strain 053442).